The following is a 175-amino-acid chain: ADP-ribosylation factor 6 (175 aa).

A lipid anchor (N-myristoyl glycine) is attached at Gly2. Lys3 carries the N6-myristoyl lysine lipid modification. GTP contacts are provided by residues 23 to 28, 41 to 44, 63 to 67, 122 to 125, and 155 to 156; these read AAGKTT, TIPT, DVGGQ, NKQD, and CA.

It belongs to the small GTPase superfamily. Arf family. As to quaternary structure, interacts (when activated) with GGA1, GGA2 and GGA3; the interaction is required for proper subcellular location of GGA1, GGA2 and GGA3. Interacts with PIP5K1C. Interacts with USP6 (via Rab-GAP TBC domain). Interacts with RAB11FIP3 and RAB11FIP4. Interacts with HERC1. Interacts with ARHGAP21. Interacts with ASAP3; the interaction is stabilized by calcium ions. Interacts with NCS1/FREQ at the plasma membrane. Interacts with TBC1D24. Interacts with ECPAS. Interacts with MICALL1. Interacts with SPAG9 homodimers, forming heterotetramers. Interacts with CYTH3. Interacts with ASAP2. Interacts with UACA. Interacts with KIF23, forming heterodimers and heterotetramers. Interacts with C9orf72. Interacts (GTP-bound form) with TJAP1/PILT. Interacts with PRKAA2. Interacts with CD36 (when palmitoylated); this interaction mediates CD36 transport from the Golgi to the plasma membrane. Interacts with APBB1. (Microbial infection) Interacts with the V.cholerae enterotoxin subunit A1; this causes a conformation change so that the toxin can bind NAD and catalyze the ADP-ribosylation of Gs alpha. In terms of assembly, (Microbial infection) Interacts with EspG from enteropathogenic E.coli. As to quaternary structure, (Microbial infection) Identified in a complex with RAB1A and EspG from enteropathogenic E.coli. (Microbial infection) Interacts with human enterovirus 71 protein VP1. GTP-bound form is myristoylated on Lys-3 by NMT1 and NMT2, allowing ARF6 to remain on membranes during the GTPase cycle, thereby promoting its activity. GDP-bound inactive form is demyristoylated on Lys-3 by SIRT2 at early endosomes or endocytic recycling compartment to allow its efficient activation by a guanine exchange factor (GEF) after GDP release. As to expression, ubiquitous, with higher levels in heart, substantia nigra, and kidney.

It is found in the cytoplasm. It localises to the cytosol. Its subcellular location is the cell membrane. The protein localises to the endosome membrane. The protein resides in the recycling endosome membrane. It is found in the cell projection. It localises to the filopodium membrane. Its subcellular location is the ruffle. The protein localises to the cleavage furrow. The protein resides in the midbody. It is found in the midbody ring. It localises to the early endosome membrane. Its subcellular location is the golgi apparatus. The protein localises to the trans-Golgi network membrane. It catalyses the reaction GTP + H2O = GDP + phosphate + H(+). Its activity is regulated as follows. Activation is generally mediated by a guanine exchange factor (GEF), while inactivation through hydrolysis of bound GTP is catalyzed by a GTPase activating protein (GAP). Activated by ASAP3. Inactivated by ACAP1 and ACAP2. Activated by NGF via NTRK1. Activated by PRKAA2 through its C-terminal regulatory domain. Functionally, GTP-binding protein involved in protein trafficking that regulates endocytic recycling and cytoskeleton remodeling. GTP-bound form plays an important role in the transport of multiple palmitoylated proteins form the Golgi to the plasma membrane. Required for normal completion of mitotic cytokinesis. Plays a role in the reorganization of the actin cytoskeleton and the formation of stress fibers. Involved in the regulation of dendritic spine development, contributing to the regulation of dendritic branching and filopodia extension. Potentiates the neurite outgrowth in primary neurons by interacting with the molecular adapter APBB1. Plays an important role in membrane trafficking, during junctional remodeling and epithelial polarization. Regulates surface levels of adherens junction proteins such as CDH1. Required for NTRK1 sorting to the recycling pathway from early endosomes. (Microbial infection) Functions as an allosteric activator of the cholera toxin catalytic subunit, an ADP-ribosyltransferase. Its function is as follows. (Microbial infection) Plays a key role in the endocytosis of enterovirus 71 and thus viral entry into brain microvascular endothelial cells. This Homo sapiens (Human) protein is ADP-ribosylation factor 6.